Reading from the N-terminus, the 90-residue chain is U7-theraphotoxin-Hhn1a 8 (90 aa).

The signal sequence occupies residues 1-19 (MKTAIFTVVLALAVFAVLS). The propeptide occupies 20 to 50 (FGWEANEKALSEEFTELIHEKGAASETEARE). Cystine bridges form between cysteine 51/cysteine 65, cysteine 58/cysteine 70, and cysteine 64/cysteine 81.

Belongs to the neurotoxin 10 (Hwtx-1) family. 13 (Hntx-13) subfamily. As to expression, expressed by the venom gland.

The protein localises to the secreted. Its function is as follows. Ion channel inhibitor. The protein is U7-theraphotoxin-Hhn1a 8 of Cyriopagopus hainanus (Chinese bird spider).